We begin with the raw amino-acid sequence, 908 residues long: NADH-quinone oxidoreductase subunit G (908 aa).

A 2Fe-2S ferredoxin-type domain is found at 2 to 83 (ATIHVDGKEY…GTFISIDDEE (82 aa)). 4 residues coordinate [2Fe-2S] cluster: C34, C45, C48, and C67. In terms of domain architecture, 4Fe-4S His(Cys)3-ligated-type spans 83-122 (EAKQFRESVVEWLMTNHPHDCPVCEEGGNCHLQDMTVMTG). [4Fe-4S] cluster-binding residues include H99, C103, C106, C112, C151, C154, C157, C201, C228, C231, C235, and C263. Positions 221–277 (MQFAPSICQQCSIGCNISPGERYGELRRIENRYNGTVNHYFLCDRGRFGYGYVNLKD) constitute a 4Fe-4S Mo/W bis-MGD-type domain.

The protein belongs to the complex I 75 kDa subunit family. In terms of assembly, composed of 13 different subunits. Subunits NuoCD, E, F, and G constitute the peripheral sector of the complex. It depends on [2Fe-2S] cluster as a cofactor. [4Fe-4S] cluster serves as cofactor.

The enzyme catalyses a quinone + NADH + 5 H(+)(in) = a quinol + NAD(+) + 4 H(+)(out). Its function is as follows. NDH-1 shuttles electrons from NADH, via FMN and iron-sulfur (Fe-S) centers, to quinones in the respiratory chain. The immediate electron acceptor for the enzyme in this species is believed to be ubiquinone. Couples the redox reaction to proton translocation (for every two electrons transferred, four hydrogen ions are translocated across the cytoplasmic membrane), and thus conserves the redox energy in a proton gradient. This chain is NADH-quinone oxidoreductase subunit G (nuoG), found in Salmonella typhi.